A 321-amino-acid polypeptide reads, in one-letter code: Hydrolase 3 (321 aa).

Residues 80–82 (HGA) carry the Involved in the stabilization of the negatively charged intermediate by the formation of the oxyanion hole motif. Catalysis depends on residues S172 and D267.

Belongs to the 'GDXG' lipolytic enzyme family.

It catalyses the reaction dihydroprecondylocarpine acetate + NADPH = (+)-vincadifformine + acetate + NADP(+). Its pathway is alkaloid biosynthesis. Its function is as follows. Component of the seco-iridoid and derivatives monoterpenoid indole alkaloids (MIAs, e.g. vincadifformine) biosynthesis pathway. Catalyzes the conversion of O-acetylstemmadenine (OAS) to vincadifformine. May also trigger the formation of additional unknown MIAs. The sequence is that of Hydrolase 3 from Catharanthus roseus (Madagascar periwinkle).